Reading from the N-terminus, the 141-residue chain is Nucleoside triphosphatase NudI (141 aa).

Residues 1–141 (MRQRTIVCPL…RKTLRLKGLL (141 aa)) enclose the Nudix hydrolase domain. Positions 38–59 (GGVEPGERIEEALRREIREELG) match the Nudix box motif.

The protein belongs to the Nudix hydrolase family. NudI subfamily. As to quaternary structure, monomer. Mg(2+) is required as a cofactor.

The catalysed reaction is a ribonucleoside 5'-triphosphate + H2O = a ribonucleoside 5'-phosphate + diphosphate + H(+). It catalyses the reaction a 2'-deoxyribonucleoside 5'-triphosphate + H2O = a 2'-deoxyribonucleoside 5'-phosphate + diphosphate + H(+). The enzyme catalyses dUTP + H2O = dUMP + diphosphate + H(+). It carries out the reaction dTTP + H2O = dTMP + diphosphate + H(+). The catalysed reaction is dCTP + H2O = dCMP + diphosphate + H(+). Functionally, catalyzes the hydrolysis of nucleoside triphosphates, with a preference for pyrimidine deoxynucleoside triphosphates (dUTP, dTTP and dCTP). In Escherichia coli O9:H4 (strain HS), this protein is Nucleoside triphosphatase NudI.